Here is a 504-residue protein sequence, read N- to C-terminus: Nuclear hormone receptor family member nhr-80 (504 aa).

A DNA-binding region (nuclear receptor) is located at residues Ser-27–Pro-103. NR C4-type zinc fingers lie at residues Cys-30 to Cys-50 and Cys-66 to Cys-86. The segment covering Ser-177–Thr-192 has biased composition (low complexity). The segment at Ser-177–Ala-199 is disordered. The NR LBD domain maps to Glu-214 to Asp-466. The AF-2 stretch occupies residues Leu-455 to Asp-466.

It belongs to the nuclear hormone receptor family. As to quaternary structure, interacts with nuclear hormone receptor nhr-49; the interaction is direct. In terms of tissue distribution, expressed in the intestine and in some head and tail neurons, as well as the ventral nerve cord.

It localises to the nucleus. Functionally, transcription factor. Binds to regulatory elements and regulates transcription of target genes, including acyltransferase dgat-2. As part of a lysosome-to-nucleus retrograde lipid signaling pathway, acts as a direct nuclear receptor of oleoylethanolamide (OEA) and, acting in concert with nuclear hormone receptor nhr-49, activates the transcription of genes promoting longevity and mitochondrial beta-oxidation. Required to modulate expression of delta-9 fatty acid desaturases, thereby regulating lipid metabolism; in some contexts, acting in concert with nhr-49. Involved in modulation of lipid metabolism in response to the citrate-induced mitochondrial unfolded protein response (mtUPR), acting downstream of transcription factor dve-1 and ubiquitin-like protein 5. Plays a role in modulating mitochondrial morphology and function. Involved in positively modulating life-span in a germline-dependent manner, acting in concert with nuclear hormone receptor daf-12. Plays a role in transgenerational lipid accumulation in response to a high-fat diet. The protein is Nuclear hormone receptor family member nhr-80 of Caenorhabditis elegans.